We begin with the raw amino-acid sequence, 398 residues long: 1-aminocyclopropane-1-carboxylate oxidase homolog 5 (398 aa).

Positions K247–T347 constitute a Fe2OG dioxygenase domain. Residues H271, D273, and H327 each coordinate Fe cation. R338 provides a ligand contact to 2-oxoglutarate.

Belongs to the iron/ascorbate-dependent oxidoreductase family. Requires Fe(2+) as cofactor. As to expression, expressed in etiolated seedlings, leaves, stems and flowers.

This Arabidopsis thaliana (Mouse-ear cress) protein is 1-aminocyclopropane-1-carboxylate oxidase homolog 5 (2A6).